A 919-amino-acid chain; its full sequence is WD repeat-containing protein 47 (919 aa).

Residues 10–42 (KEVEIIKLILDFLNSKKLHISMLALEKESGVIN) enclose the LisH domain. The 58-residue stretch at 45-102 (FSDDMLFLRQLILDGQWDEVLQFIQPLECMEKFDKKRFRYIILKQKFLEALCVNNAMS) folds into the CTLH domain. Residue Thr285 is modified to Phosphothreonine. Phosphoserine is present on residues Ser289, Ser292, Ser297, and Ser312. The tract at residues 393–421 (GQSSVSEKEPANGAQNPGPAKQEKNELRD) is disordered. Position 422 is a phosphoserine (Ser422). The disordered stretch occupies residues 500–590 (LNQQCNGSKG…SLSRSKGEED (91 aa)). Positions 517–551 (VTSFTTPPQDSSQRLTHDASNIHTSTPRNPGSTNH) are enriched in polar residues. Thr542 is subject to Phosphothreonine. 7 WD repeats span residues 604 to 643 (EDTQ…DPSA), 659 to 698 (HHKG…CNAT), 706 to 748 (MHDG…GQGL), 753 to 791 (GHTG…CVRV), 798 to 837 (GTGS…MVQS), 840 to 879 (PHSS…TKQL), and 886 to 918 (EHKD…WTYN).

In terms of assembly, interacts with MAP1S (via WD repeats).

The protein localises to the cytoplasm. The protein resides in the cytoskeleton. The polypeptide is WD repeat-containing protein 47 (WDR47) (Homo sapiens (Human)).